The chain runs to 184 residues: Large ribosomal subunit protein uL5 (184 aa).

This sequence belongs to the universal ribosomal protein uL5 family. As to quaternary structure, part of the 50S ribosomal subunit; part of the 5S rRNA/L5/L18/L25 subcomplex. Contacts the 5S rRNA and the P site tRNA. Forms a bridge to the 30S subunit in the 70S ribosome.

Its function is as follows. This is one of the proteins that bind and probably mediate the attachment of the 5S RNA into the large ribosomal subunit, where it forms part of the central protuberance. In the 70S ribosome it contacts protein S13 of the 30S subunit (bridge B1b), connecting the 2 subunits; this bridge is implicated in subunit movement. Contacts the P site tRNA; the 5S rRNA and some of its associated proteins might help stabilize positioning of ribosome-bound tRNAs. The polypeptide is Large ribosomal subunit protein uL5 (Wolinella succinogenes (strain ATCC 29543 / DSM 1740 / CCUG 13145 / JCM 31913 / LMG 7466 / NCTC 11488 / FDC 602W) (Vibrio succinogenes)).